A 91-amino-acid polypeptide reads, in one-letter code: uncharacterized protein (91 aa).

3 helical membrane-spanning segments follow: residues 9–29, 44–64, and 71–91; these read VLWGAVIAAFILSIVFYPFLP, LTVNKLAGTVMLPVLMVVFAW, and QFVFAVYILLICHIVVLCLAL.

Its subcellular location is the cell membrane. This is an uncharacterized protein from Bacillus subtilis (strain 168).